The chain runs to 4250 residues: Dynein axonemal heavy chain 1 (4250 aa).

Positions 1 to 73 are disordered; that stretch reads MEECNKEGPS…KSPLTGTDKK (73 aa). Residues 1 to 1527 form a stem region; the sequence is MEECNKEGPS…YIRAVNAEFI (1527 aa). The segment covering 24-42 has biased composition (basic and acidic residues); it reads PESHDLEKILQESNYHPER. Residues 46-55 show a composition bias toward pro residues; that stretch reads NPDPKTPPLP. 4 AAA regions span residues 1528-1749, 1809-2042, 2174-2434, and 2532-2784; these read YGYE…VISA, QAIR…NTVK, TMMP…VFQG, and DYNQ…LARH. Residues 1566 to 1573 carry the GPAGTGKT motif motif; sequence GPAGTGKT. 1566 to 1573 lines the ATP pocket; sequence GPAGTGKT. Residues 1616–1622 carry the CFDEFNR motif motif; that stretch reads CFDEFNR. Residues 1847 to 1854, 2212 to 2219, and 2571 to 2578 contribute to the ATP site; these read GPTGSGKS, GPTGTGKT, and GVGGSGRS. Residues 2799–3097 are stalk; it reads FSILIGQKKM…EELEMKCEQC (299 aa). Residues 3045–3128 adopt a coiled-coil conformation; sequence LREAQDDLEV…QETVENLENM (84 aa). AAA regions lie at residues 3182–3412 and 3625–3844; these read LGNP…EIQA and MQDF…QLKM.

It belongs to the dynein heavy chain family. As to quaternary structure, consists of at least two heavy chains and a number of intermediate and light chains.

It localises to the cytoplasm. The protein localises to the cytoskeleton. It is found in the cilium axoneme. The protein resides in the cell projection. Its subcellular location is the cilium. It localises to the flagellum. Functionally, force generating protein of cilia required for sperm flagellum motility. Produces force towards the minus ends of microtubules. Dynein has ATPase activity; the force-producing power stroke is thought to occur on release of ADP. Required in spermatozoa for the formation of the inner dynein arms and biogenesis of the axoneme. The polypeptide is Dynein axonemal heavy chain 1 (Mus musculus (Mouse)).